The sequence spans 786 residues: Endonuclease MutS2 (786 aa).

Residue 335–342 participates in ATP binding; that stretch reads GPNTGGKT. Residues 711 to 786 enclose the Smr domain; that stretch reads LDLRGERFEN…GLGVTVVELK (76 aa).

This sequence belongs to the DNA mismatch repair MutS family. MutS2 subfamily. In terms of assembly, homodimer. Binds to stalled ribosomes, contacting rRNA.

Endonuclease that is involved in the suppression of homologous recombination and thus may have a key role in the control of bacterial genetic diversity. Functionally, acts as a ribosome collision sensor, splitting the ribosome into its 2 subunits. Detects stalled/collided 70S ribosomes which it binds and splits by an ATP-hydrolysis driven conformational change. Acts upstream of the ribosome quality control system (RQC), a ribosome-associated complex that mediates the extraction of incompletely synthesized nascent chains from stalled ribosomes and their subsequent degradation. Probably generates substrates for RQC. This Bacillus anthracis (strain A0248) protein is Endonuclease MutS2.